Consider the following 119-residue polypeptide: Protein Wnt-4 (119 aa).

A lipid anchor (O-palmitoleoyl serine; by PORCN) is attached at Ser-1. Disulfide bonds link Cys-69–Cys-100 and Cys-85–Cys-95. Residue Asn-86 is glycosylated (N-linked (GlcNAc...) asparagine).

It belongs to the Wnt family. In terms of processing, palmitoleoylation is required for efficient binding to frizzled receptors. Depalmitoleoylation leads to Wnt signaling pathway inhibition.

It localises to the secreted. The protein localises to the extracellular space. The protein resides in the extracellular matrix. In terms of biological role, ligand for members of the frizzled family of seven transmembrane receptors. Plays an important role in embryonic development. The polypeptide is Protein Wnt-4 (WNT4) (Meleagris gallopavo (Wild turkey)).